Reading from the N-terminus, the 786-residue chain is Sucrose synthase (786 aa).

The segment at 259 to 736 (MIFSLVVLSP…ALKRVEERYN (478 aa)) is GT-B glycosyltransferase.

It belongs to the glycosyltransferase 1 family. Homotetramer.

It catalyses the reaction an NDP-alpha-D-glucose + D-fructose = a ribonucleoside 5'-diphosphate + sucrose + H(+). Its function is as follows. Catalyzes the reversible conversion of sucrose and a nucleotide disphosphate (NDP) into fructose and NDP-glucose; although the reaction is freely reversible in vitro, the physiological reaction seems to be sucrose cleavage. Unlike characterized plant enzymes prefers ADP as a cosubstrate, whereas plants prefer UDP. Its preference for ADP over UDP suggests it may directly link sucrose and glycogen metabolism. In Denitrovibrio acetiphilus (strain DSM 12809 / NBRC 114555 / N2460), this protein is Sucrose synthase.